A 203-amino-acid chain; its full sequence is Nucleoside triphosphate pyrophosphatase (203 aa).

The active-site Proton acceptor is the aspartate 77.

The protein belongs to the Maf family. The cofactor is a divalent metal cation.

It localises to the cytoplasm. It carries out the reaction a ribonucleoside 5'-triphosphate + H2O = a ribonucleoside 5'-phosphate + diphosphate + H(+). The enzyme catalyses a 2'-deoxyribonucleoside 5'-triphosphate + H2O = a 2'-deoxyribonucleoside 5'-phosphate + diphosphate + H(+). In terms of biological role, nucleoside triphosphate pyrophosphatase. May have a dual role in cell division arrest and in preventing the incorporation of modified nucleotides into cellular nucleic acids. The polypeptide is Nucleoside triphosphate pyrophosphatase (Rickettsia felis (strain ATCC VR-1525 / URRWXCal2) (Rickettsia azadi)).